A 415-amino-acid polypeptide reads, in one-letter code: MERSHIRDVDPDAADALSSERQRQEDTLAMIASENHVSEAVLEAQGSALTNKYAEGYPGERYYAGCEYADEIESLAIERAEELWGAEHVNVQPHSGTQANMAVYLTALDPGDKILSLDLTHGGHLSHGHPANFTGQTYTVEQYEVDPETGYIDYEGLKTKADEFNPDIIVSGYSAYPREVEFERIQEAADLADAYHLADIAHITGLVAAGVHTSPVGVADFVTGSTHKTIRAGRGGIIMCNEEHADDIDNSVFPGAQGGPLMHNVAGKAVGFKEALSDEFEAYAEQTVKNAEELANTLTDAGLSVVSGGTDNHLVLVDLRPSHPETTGKEVEAALESAGIIMNANTVPGETRSAFNPSGIRVGTPALTTRGFTESTVREVGELMIELIDDPTDDEAIAAVSDRVDTLTDEYPLYR.

A compositionally biased stretch (basic and acidic residues) spans 1–10 (MERSHIRDVD). The tract at residues 1-21 (MERSHIRDVDPDAADALSSER) is disordered. (6S)-5,6,7,8-tetrahydrofolate contacts are provided by residues Leu119 and 123-125 (GHL). Residue Lys228 is modified to N6-(pyridoxal phosphate)lysine. Residue 353-355 (SAF) coordinates (6S)-5,6,7,8-tetrahydrofolate.

The protein belongs to the SHMT family. Homodimer. Requires pyridoxal 5'-phosphate as cofactor.

The protein resides in the cytoplasm. It catalyses the reaction (6R)-5,10-methylene-5,6,7,8-tetrahydrofolate + glycine + H2O = (6S)-5,6,7,8-tetrahydrofolate + L-serine. It participates in one-carbon metabolism; tetrahydrofolate interconversion. It functions in the pathway amino-acid biosynthesis; glycine biosynthesis; glycine from L-serine: step 1/1. Its function is as follows. Catalyzes the reversible interconversion of serine and glycine with tetrahydrofolate (THF) serving as the one-carbon carrier. Also exhibits THF-independent aldolase activity toward beta-hydroxyamino acids, producing glycine and aldehydes, via a retro-aldol mechanism. In Haloquadratum walsbyi (strain DSM 16790 / HBSQ001), this protein is Serine hydroxymethyltransferase.